Here is a 196-residue protein sequence, read N- to C-terminus: ECF RNA polymerase sigma factor SigM (196 aa).

A sigma-70 factor domain-2 region spans residues 39 to 105 (LFRRHHRQLH…ACLDRLRRAK (67 aa)). The Polymerase core binding motif lies at 63–66 (DALQ). Residues 130 to 181 (AVQRALMRLPVEQRAAVVAVDMQGYSIADTARMLGVAEGTVKSRCARARARL) are sigma-70 factor domain-4. A DNA-binding region (H-T-H motif) is located at residues 156 to 175 (IADTARMLGVAEGTVKSRCA).

This sequence belongs to the sigma-70 factor family. ECF subfamily. In terms of assembly, interacts transiently with the RNA polymerase catalytic core formed by RpoA, RpoB, RpoC and RpoZ (2 alpha, 1 beta, 1 beta' and 1 omega subunit) to form the RNA polymerase holoenzyme that can initiate transcription. Interacts (via sigma-70 factor domain-4) with anti-sigma-M factor RsmA (AC L7N5D7).

Functionally, sigma factors are initiation factors that promote the attachment of RNA polymerase to specific initiation sites and are then released. Extracytoplasmic function (ECF) sigma factors are held in an inactive form by an anti-sigma factor (RsaM, AC L7N5D7) until released by regulated intramembrane proteolysis. This sigma factor is required for the synthesis of surface or secreted molecules. The protein is ECF RNA polymerase sigma factor SigM (sigM) of Mycobacterium tuberculosis (strain ATCC 25618 / H37Rv).